Reading from the N-terminus, the 427-residue chain is Aspartate aminotransferase, mitochondrial (427 aa).

Residues 1 to 26 (MALLKSRLLVGVARCQPCLAAVQGRA) constitute a mitochondrion transit peptide. Substrate contacts are provided by G62, W159, and N212. Residue K276 is modified to N6-(pyridoxal phosphate)lysine. R404 lines the substrate pocket.

It belongs to the class-I pyridoxal-phosphate-dependent aminotransferase family. As to quaternary structure, homodimer. The cofactor is pyridoxal 5'-phosphate.

The protein localises to the mitochondrion matrix. The enzyme catalyses L-aspartate + 2-oxoglutarate = oxaloacetate + L-glutamate. It catalyses the reaction L-kynurenine + 2-oxoglutarate = kynurenate + L-glutamate + H2O. In terms of biological role, catalyzes the irreversible transamination of the L-tryptophan metabolite L-kynurenine to form kynurenic acid (KA). As a member of the malate-aspartate shuttle, it has a key role in the intracellular NAD(H) redox balance. Is important for metabolite exchange between mitochondria and cytosol, and for amino acid metabolism. This is Aspartate aminotransferase, mitochondrial (got2) from Xenopus tropicalis (Western clawed frog).